The primary structure comprises 137 residues: Putative transcription elongation factor S-II-like protein 055R (137 aa).

The segment at 85 to 136 (DFITCPYEVSEGVLRCGKCDCTKILWFSKQTRSMDEPTTIFASCSNCKTRWT) adopts a TFIIS-type zinc-finger fold. Zn(2+)-binding residues include cysteine 89, cysteine 103, cysteine 128, and cysteine 131.

The protein belongs to the IIV-6 349L family.

The polypeptide is Putative transcription elongation factor S-II-like protein 055R (Aedes vexans (Inland floodwater mosquito)).